Consider the following 228-residue polypeptide: Uracil-DNA glycosylase (228 aa).

D65 serves as the catalytic Proton acceptor.

This sequence belongs to the uracil-DNA glycosylase (UDG) superfamily. UNG family.

It localises to the cytoplasm. It carries out the reaction Hydrolyzes single-stranded DNA or mismatched double-stranded DNA and polynucleotides, releasing free uracil.. In terms of biological role, excises uracil residues from the DNA which can arise as a result of misincorporation of dUMP residues by DNA polymerase or due to deamination of cytosine. The polypeptide is Uracil-DNA glycosylase (Lacticaseibacillus paracasei (strain ATCC 334 / BCRC 17002 / CCUG 31169 / CIP 107868 / KCTC 3260 / NRRL B-441) (Lactobacillus paracasei)).